A 378-amino-acid polypeptide reads, in one-letter code: Rhodopsin (378 aa).

The Extracellular segment spans residues 1-53 (MMSIASGPSHAAYTWTAQGGGFGNQTVVDKVPPEMLHLVDAHWYQFPPMNPLW). N-linked (GlcNAc...) asparagine glycosylation occurs at Asn-24. A helical transmembrane segment spans residues 54 to 78 (HAILGFVIGILGMISVIGNGMVIYI). Residues 79-90 (FTTTKSLRTPSN) are Cytoplasmic-facing. The helical transmembrane segment at 91–115 (LLVINLAISDFLMMLSMSPAMVINC) threads the bilayer. Residues 116 to 130 (YYETWVLGPLVCELY) are Extracellular-facing. A disulfide bond links Cys-127 and Cys-204. Residues 131 to 150 (GLTGSLFGCGSIWTMTMIAF) form a helical membrane-spanning segment. Topologically, residues 151 to 169 (DRYNVIVKGLSAKPMTING) are cytoplasmic. Residues 170 to 193 (ALLRILGIWFFSLGWTIAPMFGWN) traverse the membrane as a helical segment. At 194–217 (RYVPEGNMTACGTDYLTKDLLSRS) the chain is on the extracellular side. An N-linked (GlcNAc...) asparagine glycan is attached at Asn-200. A helical transmembrane segment spans residues 218-245 (YILVYSFFCYFLPLFLIIYSYFFIIQAV). Over 246 to 280 (AAHEKNMREQAKKMNVASLRSAENQSTSAECKLAK) the chain is Cytoplasmic. The helical transmembrane segment at 281–304 (VALMTISLWFMAWTPYLVINYAGI) threads the bilayer. At 305–311 (FETVKIN) the chain is on the extracellular side. Residues 312-336 (PLFTIWGSLFAKANAVYNPIVYGIS) form a helical membrane-spanning segment. Lys-323 carries the N6-(retinylidene)lysine modification. The Cytoplasmic segment spans residues 337–378 (HPKYRAALFQRFPSLACSSGPAGADTLSTTTTVTEGTEKPAA). Residues 356–378 (GPAGADTLSTTTTVTEGTEKPAA) are disordered. A compositionally biased stretch (low complexity) spans 362–371 (TLSTTTTVTE).

This sequence belongs to the G-protein coupled receptor 1 family. Opsin subfamily. Post-translationally, phosphorylated on some or all of the serine and threonine residues present in the C-terminal region.

The protein localises to the membrane. Its function is as follows. Visual pigments are the light-absorbing molecules that mediate vision. They consist of an apoprotein, opsin, covalently linked to cis-retinal. This is Rhodopsin from Cataglyphis bombycina (Saharan silver ant).